Reading from the N-terminus, the 506-residue chain is Apolipoprotein N-acyltransferase (506 aa).

The next 6 helical transmembrane spans lie at 24–44, 58–78, 85–105, 125–145, 162–182, and 192–212; these read LALAPFDFWPLVLVSVAMFYL, GWCYGFGLYGAGTSWIYVSIH, ALLAGLLMLLFIAAIALFFAL, LAFAALWLWQEAFRGWFLTGF, LAPVGGVWLISFALGLTAALL, and KSFLAMGVLLLLAPWVAGLAL. Residues 230–470 form the CN hydrolase domain; that stretch reads MQGNIEQSMK…RGVLYGEVVP (241 aa). The Proton acceptor role is filled by glutamate 269. Lysine 330 is a catalytic residue. Catalysis depends on cysteine 382, which acts as the Nucleophile. Residues 482-502 form a helical membrane-spanning segment; the sequence is SWPLAIVCLLLFGWALLAARI.

The protein belongs to the CN hydrolase family. Apolipoprotein N-acyltransferase subfamily.

It localises to the cell inner membrane. It catalyses the reaction N-terminal S-1,2-diacyl-sn-glyceryl-L-cysteinyl-[lipoprotein] + a glycerophospholipid = N-acyl-S-1,2-diacyl-sn-glyceryl-L-cysteinyl-[lipoprotein] + a 2-acyl-sn-glycero-3-phospholipid + H(+). It functions in the pathway protein modification; lipoprotein biosynthesis (N-acyl transfer). In terms of biological role, catalyzes the phospholipid dependent N-acylation of the N-terminal cysteine of apolipoprotein, the last step in lipoprotein maturation. In Pseudomonas syringae pv. tomato (strain ATCC BAA-871 / DC3000), this protein is Apolipoprotein N-acyltransferase.